The following is a 259-amino-acid chain: Aspartate/glutamate leucyltransferase (259 aa).

Belongs to the R-transferase family. Bpt subfamily.

Its subcellular location is the cytoplasm. It catalyses the reaction N-terminal L-glutamyl-[protein] + L-leucyl-tRNA(Leu) = N-terminal L-leucyl-L-glutamyl-[protein] + tRNA(Leu) + H(+). The catalysed reaction is N-terminal L-aspartyl-[protein] + L-leucyl-tRNA(Leu) = N-terminal L-leucyl-L-aspartyl-[protein] + tRNA(Leu) + H(+). Functionally, functions in the N-end rule pathway of protein degradation where it conjugates Leu from its aminoacyl-tRNA to the N-termini of proteins containing an N-terminal aspartate or glutamate. The sequence is that of Aspartate/glutamate leucyltransferase from Sinorhizobium medicae (strain WSM419) (Ensifer medicae).